The following is a 202-amino-acid chain: NADH-quinone oxidoreductase subunit C (202 aa).

This sequence belongs to the complex I 30 kDa subunit family. In terms of assembly, NDH-1 is composed of 14 different subunits. Subunits NuoB, C, D, E, F, and G constitute the peripheral sector of the complex.

Its subcellular location is the cell inner membrane. The enzyme catalyses a quinone + NADH + 5 H(+)(in) = a quinol + NAD(+) + 4 H(+)(out). Its function is as follows. NDH-1 shuttles electrons from NADH, via FMN and iron-sulfur (Fe-S) centers, to quinones in the respiratory chain. The immediate electron acceptor for the enzyme in this species is believed to be ubiquinone. Couples the redox reaction to proton translocation (for every two electrons transferred, four hydrogen ions are translocated across the cytoplasmic membrane), and thus conserves the redox energy in a proton gradient. The polypeptide is NADH-quinone oxidoreductase subunit C (Bartonella henselae (strain ATCC 49882 / DSM 28221 / CCUG 30454 / Houston 1) (Rochalimaea henselae)).